The primary structure comprises 231 residues: Protein OPG061 (231 aa).

Belongs to the orthopoxvirus OPG058 family.

Its subcellular location is the host nucleus. It localises to the host nucleolus. This Variola virus protein is Protein OPG061 (OPG061).